The primary structure comprises 252 residues: ELH type 2 (252 aa).

Positions 1-19 (AISLLMCLILSALCASSES) are cleaved as a signal peptide. Propeptides lie at residues 20–75 (AVVH…VNNE), 92–130 (PQEV…QREL), and 144–185 (AAGD…SGIA). Positions 145 to 161 (AGDEDKAEEHNPETESH) are enriched in basic and acidic residues. The interval 145 to 171 (AGDEDKAEEHNPETESHSRRKRSALTP) is disordered. Lys-222 is modified (lysine amide).

It belongs to the molluscan ELH family. Bag cell neurons.

It is found in the secreted. ELH acts as a neurotransmitter locally, upon neurons of the abdominal ganglion and as a hormone by diffusing into the circulating hemolymph and modulating the activity of other organs. It specifically causes contraction of smooth muscle in the ovotestis and expulsion of the egg string. Its function is as follows. Alpha-BCP decreases the activity of a cluster of neurons in the left upper quadrant of the abdominal ganglion. Functionally, beta-BCP specifically excites 2 neurons, L1 and R1, in the abdominal ganglion. The sequence is that of ELH type 2 (ELH2) from Aplysia parvula (Dwarf sea hare).